We begin with the raw amino-acid sequence, 538 residues long: Furcatin hydrolase (538 aa).

The N-terminal 66 residues, 1–66, are a transit peptide targeting the chloroplast; it reads MATITTLASS…NFNKDNWLAS (66 aa). The tract at residues 18-37 is disordered; it reads SFPGGSSRKPKKDNLSIKPP. A beta-D-glucoside is bound by residues Q88, H192, and 237 to 238; that span reads NE. The Proton donor role is filled by E238. The cysteines at positions 257 and 260 are disulfide-linked. A beta-D-glucoside-binding positions include Y376, E447, W494, 501 to 502, and F510; that span reads EW. Residue E447 is the Nucleophile of the active site.

The protein belongs to the glycosyl hydrolase 1 family. In terms of tissue distribution, expressed in young and mature leaves, but not in fruit and stem.

Its subcellular location is the plastid. The protein resides in the chloroplast. The catalysed reaction is 7-[beta-D-apiofuranosyl-(1-&gt;6)-beta-D-glucopyranosyloxy]isoflavonoid + H2O = a 7-hydroxyisoflavonoid + beta-D-apiofuranosyl-(1-&gt;6)-D-glucose.. Its function is as follows. Disaccharide-specific acuminosidase, hydrolyzes the beta-glycosidic bond between p-allylphenol and acuminose with retention of anomeric configuration. Has highest activity towards furcatin, and lower activity towards beta-primeverosides and beta-vicianoside. Has very low activity towards beta-gentobiosides. The polypeptide is Furcatin hydrolase (Viburnum furcatum (Scarlet leaved viburnum)).